The following is an 89-amino-acid chain: MALLDFFLSRKKPTANIAKERLQIIVAERRRGDSEPHYLPDLKRDILAVICKYIQIDPEMLHVQFEQKGDDISVLELNVTLPETEETPK.

It belongs to the MinE family.

Functionally, prevents the cell division inhibition by proteins MinC and MinD at internal division sites while permitting inhibition at polar sites. This ensures cell division at the proper site by restricting the formation of a division septum at the midpoint of the long axis of the cell. The protein is Cell division topological specificity factor of Yersinia pestis bv. Antiqua (strain Angola).